Consider the following 236-residue polypeptide: MLSTLIRRLSRALLWFVAGSIVLVLVFRWVPPPGTALMVERKVQSWVNGEPIDLQRDWEPWENISDELKVAVIAGEDQKFASHWGFDLPAIQAALAHNERGGNIRGASTLTQQVAKNLFLWSGRSWFRKGLEAWFTALIELFWSKERILEVYLNSAEWGKGVFGAQAAARYHFGVDASRLSRQQAAQLAAVLPSPIKWSASRPSAYVASRAGWIRRQMSQLGGPSYLMQLDSSRKL.

Residues 12–31 form a helical membrane-spanning segment; sequence ALLWFVAGSIVLVLVFRWVP.

Belongs to the glycosyltransferase 51 family.

It localises to the cell inner membrane. It catalyses the reaction [GlcNAc-(1-&gt;4)-Mur2Ac(oyl-L-Ala-gamma-D-Glu-L-Lys-D-Ala-D-Ala)](n)-di-trans,octa-cis-undecaprenyl diphosphate + beta-D-GlcNAc-(1-&gt;4)-Mur2Ac(oyl-L-Ala-gamma-D-Glu-L-Lys-D-Ala-D-Ala)-di-trans,octa-cis-undecaprenyl diphosphate = [GlcNAc-(1-&gt;4)-Mur2Ac(oyl-L-Ala-gamma-D-Glu-L-Lys-D-Ala-D-Ala)](n+1)-di-trans,octa-cis-undecaprenyl diphosphate + di-trans,octa-cis-undecaprenyl diphosphate + H(+). It participates in cell wall biogenesis; peptidoglycan biosynthesis. Peptidoglycan polymerase that catalyzes glycan chain elongation from lipid-linked precursors. In Pseudomonas putida (strain ATCC 47054 / DSM 6125 / CFBP 8728 / NCIMB 11950 / KT2440), this protein is Biosynthetic peptidoglycan transglycosylase.